Consider the following 219-residue polypeptide: MAQQSLIYSFVARGTVILVEFTDFKGNFTSIAAQCLQKLPSSNNKFTYNCDGHTFNYLVEDGFTYCVVAVDSAGRQIPMSFLERVKEDFNKRYGGGKAATAQANSLNKEFGSKLKEHMQYCMDHPDEISKLAKVKAQVSEVKGVMMENIEKVLDRGEKIELLVDKTENLRSQAQDFRTTGTQMRRKMWLQNMKIKLIVLAIIIALILIIVLSVCHGFKC.

Residues 1-196 (MAQQSLIYSF…MWLQNMKIKL (196 aa)) are Cytoplasmic-facing. The 105-residue stretch at 10 to 114 (FVARGTVILV…SLNKEFGSKL (105 aa)) folds into the Longin domain. The v-SNARE coiled-coil homology domain maps to 130–190 (KLAKVKAQVS…TQMRRKMWLQ (61 aa)). A helical; Anchor for type IV membrane protein membrane pass occupies residues 197-217 (IVLAIIIALILIIVLSVCHGF). Over 218 to 219 (KC) the chain is Vesicular.

The protein belongs to the synaptobrevin family. As to expression, expressed in flowers, leaves, stems and roots.

Its subcellular location is the cell membrane. It localises to the early endosome membrane. Its function is as follows. Involved in the targeting and/or fusion of transport vesicles to their target membrane. The protein is Vesicle-associated membrane protein 721 of Arabidopsis thaliana (Mouse-ear cress).